A 242-amino-acid polypeptide reads, in one-letter code: MYGSEGGAMRIVAGVGENRNMERAASLADFEVDLVHSEEEFIEELRRGAAAYVRGSLPAANIMAELKKGGPLNRASWIEVGANGFLLAPVGIDEGRTVDDRFKIAVSASEFLRKTGEEPRVGVISGGRRGDLGRSPEVDRSIHEGEFLTSMIKDKYRVRHYHILIEEAVADGCNVIIAPDGITGNLIFRSLVLVGTARSYGAVALGFDGIFVDTSRSQTAEGYLRALKFAHWLARGWNEDNE.

The protein belongs to the MtxX family.

This is an uncharacterized protein from Methanothermobacter thermautotrophicus (strain ATCC 29096 / DSM 1053 / JCM 10044 / NBRC 100330 / Delta H) (Methanobacterium thermoautotrophicum).